Consider the following 606-residue polypeptide: MARISFSYLCPASWYFTVPTVSPFLRQRVAFLGLFFIPCVLLLLLIMDLRHWATSLPRDRQYERYLARVGDLEATNTEDPNLNYGLVVDCGSSGSRIFVYFWPRHNGNPHDLLDIKQMRDRNSQPVVKKIKPGISAMADTPEHASDYLRPLLSFAAAHVPVKKHRETPLYILCTAGMRLLPERQQLAILADLVKDLPLEFDFLFSQSQAEVISGKQEGVYAWIGINFVLGRFDHEDESDSDTSVDSAAGRRRTVGILDMGGASLQIAYEVPTSASDLPPKQEEAAKILLAEFNLGCDVQHTEHVYRVYVTTFLGFGGNFARQRYEDLVLNETLNKNRLLGQKTGLSPDNPFLDPCLPVGLTDMVKRNNQVLHFRGKGDWASCRTLLSPLLARSNTSQASLNGIYQSPIDFNNSEFYGFSEFFYCTEDVLRIGGHYHGPTFAKAAQDYCGMAWPVLAQRFKNGLFSSHADEHRLKYQCFKSAWMYEVLHEGFHFPYDYPNLQTAQLVYDREVQWTLGAILYKTRFLPLRDLRQGQGGVRPAHGSWLRLSFVYNHYLFFACTLVVLLAIVLYLLRIHRIHRRQTRASAPLDLLWIEQVVPMIGVQVGP.

Topologically, residues 1 to 28 are cytoplasmic; it reads MARISFSYLCPASWYFTVPTVSPFLRQR. Residues 29–49 form a helical membrane-spanning segment; it reads VAFLGLFFIPCVLLLLLIMDL. Over 50–548 the chain is Vesicular; the sequence is RHWATSLPRD…PAHGSWLRLS (499 aa). Catalysis depends on Glu217, which acts as the Proton acceptor. N-linked (GlcNAc...) asparagine glycosylation is present at Asn330. Residues Cys448 and Cys477 are joined by a disulfide bond. Residues 549-569 traverse the membrane as a helical segment; it reads FVYNHYLFFACTLVVLLAIVL. At 570–606 the chain is on the cytoplasmic side; it reads YLLRIHRIHRRQTRASAPLDLLWIEQVVPMIGVQVGP.

Belongs to the GDA1/CD39 NTPase family. It depends on Ca(2+) as a cofactor. Requires Mg(2+) as cofactor. As to expression, widely expressed. Expressed at high level in brain, kidney, liver, testis and small intestin. Weakly expressed in lung, thymus and heart.

It is found in the cytoplasmic vesicle membrane. The enzyme catalyses a ribonucleoside 5'-triphosphate + H2O = a ribonucleoside 5'-diphosphate + phosphate + H(+). It catalyses the reaction UTP + H2O = UDP + phosphate + H(+). The catalysed reaction is GTP + H2O = GDP + phosphate + H(+). It carries out the reaction CTP + H2O = CDP + phosphate + H(+). The enzyme catalyses ATP + H2O = ADP + phosphate + H(+). In terms of biological role, catalyzes the hydrolysis of nucleoside triphosphates and diphosphates in a calcium- or magnesium-dependent manner. Preferentially hydrolyzes nucleoside 5'-triphosphates, with substrate preference for UTP &gt; GTP &gt; CTP. Hydrolyzes nucleoside diphosphates only to a minor extent. In contrast to its human ortholog is able to hydrolyze ATP. In the epithelial cells of small intestine controls luminal ATP levels, therefore regulating Th17-cell development. The protein is Ectonucleoside triphosphate diphosphohydrolase 7 (Entpd7) of Mus musculus (Mouse).